A 313-amino-acid polypeptide reads, in one-letter code: ADP-L-glycero-D-manno-heptose-6-epimerase (313 aa).

NADP(+) contacts are provided by residues 10-11 (MI), 31-32 (DN), Lys38, Arg53, 75-79 (EGACS), and Asn92. The active-site Proton acceptor is the Tyr139. Lys143 serves as a coordination point for NADP(+). Asn174 contacts substrate. Val175 and Lys183 together coordinate NADP(+). Residue Lys183 is the Proton acceptor of the active site. Residues Ser185, His192, 206–209 (FAGS), Arg214, and Tyr277 contribute to the substrate site.

It belongs to the NAD(P)-dependent epimerase/dehydratase family. HldD subfamily. Homopentamer. NADP(+) is required as a cofactor.

It catalyses the reaction ADP-D-glycero-beta-D-manno-heptose = ADP-L-glycero-beta-D-manno-heptose. It functions in the pathway nucleotide-sugar biosynthesis; ADP-L-glycero-beta-D-manno-heptose biosynthesis; ADP-L-glycero-beta-D-manno-heptose from D-glycero-beta-D-manno-heptose 7-phosphate: step 4/4. Catalyzes the interconversion between ADP-D-glycero-beta-D-manno-heptose and ADP-L-glycero-beta-D-manno-heptose via an epimerization at carbon 6 of the heptose. This is ADP-L-glycero-D-manno-heptose-6-epimerase from Vibrio campbellii (strain ATCC BAA-1116).